Reading from the N-terminus, the 544-residue chain is Membrane protein insertase YidC (544 aa).

6 helical membrane-spanning segments follow: residues 13–33, 321–341, 343–363, 409–429, 461–481, and 506–526; these read LSLF…SWML, LWYL…DVIP, WGLS…PLTF, LGGC…YSLV, LYFV…FTQL, and MPIM…IYWI.

It belongs to the OXA1/ALB3/YidC family. Type 1 subfamily. In terms of assembly, interacts with the Sec translocase complex via SecD. Specifically interacts with transmembrane segments of nascent integral membrane proteins during membrane integration.

It is found in the cell inner membrane. Its function is as follows. Required for the insertion and/or proper folding and/or complex formation of integral membrane proteins into the membrane. Involved in integration of membrane proteins that insert both dependently and independently of the Sec translocase complex, as well as at least some lipoproteins. Aids folding of multispanning membrane proteins. The protein is Membrane protein insertase YidC of Borreliella afzelii (strain PKo) (Borrelia afzelii).